Reading from the N-terminus, the 295-residue chain is sn-glycerol-3-phosphate transport system permease protein UgpA (295 aa).

Over 1 to 11 (MSSSRPVFRSR) the chain is Cytoplasmic. Residues 12 to 32 (WLPYLLVAPQLIITVIFFIWP) form a helical membrane-spanning segment. Residues 33–80 (AGEALWYSLQSVDPFGFSSQFVGLDNFVTLFHDSYYLDAFWTTIKFST) lie on the Periplasmic side of the membrane. The 209-residue stretch at 76–284 (IKFSTFVTVS…FLVIVLTVVQ (209 aa)) folds into the ABC transmembrane type-1 domain. Residues 81 to 101 (FVTVSGLLVSLFFAALVEYIV) traverse the membrane as a helical segment. Residues 102 to 109 (RGSRFYQT) are Cytoplasmic-facing. A helical transmembrane segment spans residues 110-130 (LMLLPYAVAPAVAAVLWIFLF). The Periplasmic segment spans residues 131–156 (NPGRGLITHFLAEFGYDWNHAQNSGQ). The chain crosses the membrane as a helical span at residues 157–177 (AMFLVVFASVWKQISYNFLFF). Over 178–207 (YAALQSIPRSLIEAAAIDGAGPIRRFFKIA) the chain is Cytoplasmic. Residues 208 to 228 (LPLIAPVSFFLLVVNLVYAFF) form a helical membrane-spanning segment. At 229 to 262 (DTFPVIDAATSGGPVQATTTLIYKIYREGFTGLD) the chain is on the periplasmic side. A helical transmembrane segment spans residues 263 to 283 (LASSAAQSVVLMFLVIVLTVV). The Cytoplasmic portion of the chain corresponds to 284-295 (QFRYVEGKVRYQ).

The protein belongs to the binding-protein-dependent transport system permease family. UgpAE subfamily. The complex is composed of two ATP-binding proteins (UgpC), two transmembrane proteins (UgpA and UgpE) and a solute-binding protein (UgpB).

The protein localises to the cell inner membrane. Its function is as follows. Part of the ABC transporter complex UgpBAEC involved in sn-glycerol-3-phosphate (G3P) import. Probably responsible for the translocation of the substrate across the membrane. The polypeptide is sn-glycerol-3-phosphate transport system permease protein UgpA (ugpA) (Escherichia coli O6:K15:H31 (strain 536 / UPEC)).